A 323-amino-acid polypeptide reads, in one-letter code: Alpha-tubulin N-acetyltransferase 1 (323 aa).

The region spanning 1–190 is the N-acetyltransferase domain; that stretch reads MEFPFDVDAL…NNFVIFEGFF (190 aa). Residue lysine 56 is modified to N6-acetyllysine; by autocatalysis. Residue 124–137 participates in acetyl-CoA binding; the sequence is FYIHESVQRHGHGR. Lysine 146 bears the N6-acetyllysine; by autocatalysis mark. An acetyl-CoA-binding site is contributed by 160–169; sequence SQKLLKFLNK. Positions 196–239 are disordered; it reads PPAPSLRATRHSRAAAVDPTPTAPARKLPPKRAEGDIKPYSSSD. The span at 209–220 shows a compositional bias: low complexity; it reads AAAVDPTPTAPA. Basic and acidic residues predominate over residues 226 to 239; the sequence is KRAEGDIKPYSSSD. Residues lysine 233 and lysine 244 each carry the N6-acetyllysine; by autocatalysis modification. Positions 252–287 are disordered; that stretch reads PLNRAPRRATPPAHPPPRSSSLGNSPERGPLRPFVP. Residues serine 272 and serine 276 each carry the phosphoserine modification. Arginine 305 is modified (asymmetric dimethylarginine). Residue serine 315 is modified to Phosphoserine. Arginine 323 carries the omega-N-methylarginine modification.

This sequence belongs to the acetyltransferase ATAT1 family. Component of the BBSome complex. Interacts with AP2 alpha-adaptins, including AP2A2, but not with AP1 gamma-adaptin (AP1G1/AP1G2); this interaction is required for efficient alpha-tubulin acetylation, hence clathrin-coated pits are sites of microtubule acetylation. Post-translationally, autoacetylation strongly increases tubulin acetylation.

It localises to the cytoplasm. The protein resides in the membrane. Its subcellular location is the clathrin-coated pit. It is found in the cell junction. The protein localises to the focal adhesion. It localises to the cell projection. The protein resides in the axon. Its subcellular location is the cytoskeleton. It is found in the spindle. It carries out the reaction L-lysyl-[alpha-tubulin] + acetyl-CoA = N(6)-acetyl-L-lysyl-[alpha-tubulin] + CoA + H(+). Functionally, specifically acetylates 'Lys-40' in alpha-tubulin on the lumenal side of microtubules. Promotes microtubule destabilization and accelerates microtubule dynamics; this activity may be independent of acetylation activity. Acetylates alpha-tubulin with a slow enzymatic rate, due to a catalytic site that is not optimized for acetyl transfer. Enters the microtubule through each end and diffuses quickly throughout the lumen of microtubules. Acetylates only long/old microtubules because of its slow acetylation rate since it does not have time to act on dynamically unstable microtubules before the enzyme is released. Required for normal sperm flagellar function. Promotes directional cell locomotion and chemotaxis, through AP2A2-dependent acetylation of alpha-tubulin at clathrin-coated pits that are concentrated at the leading edge of migrating cells. May facilitate primary cilium assembly. This chain is Alpha-tubulin N-acetyltransferase 1, found in Macaca mulatta (Rhesus macaque).